The chain runs to 156 residues: Arginine repressor (156 aa).

The protein belongs to the ArgR family.

Its subcellular location is the cytoplasm. Its pathway is amino-acid biosynthesis; L-arginine biosynthesis [regulation]. Its function is as follows. Regulates arginine biosynthesis genes. The protein is Arginine repressor of Enterobacter sp. (strain 638).